The chain runs to 170 residues: MMAGMKIQLVCMILLAFSSWSLCSDSEEEMKALETDLLTNMHTSKISKASVPSWKMSLLNVCSLINNLNSQAEETGEFHEEELITRRKFPAALDGFSLEAMLTIYQLQKICHSRAFQHWELIQEDILDAGNDKNEKEEVIKRKIPYILKRQLYENKPRRPYILKRGSYYY.

A signal peptide spans 1–23 (MMAGMKIQLVCMILLAFSSWSLC).

The protein belongs to the neurotensin family. As to quaternary structure, interacts with NTSR1. Interacts with SORT1. Interacts with SORL1. In terms of processing, neurotensin is cleaved and degraded by Angiotensin-converting enzyme (ACE) and neprilysin (MME). In terms of tissue distribution, brain and gut.

The protein resides in the secreted. The protein localises to the cytoplasmic vesicle. It localises to the secretory vesicle. Neurotensin may play an endocrine or paracrine role in the regulation of fat metabolism. It causes contraction of smooth muscle. The chain is Neurotensin/neuromedin N (NTS) from Bos taurus (Bovine).